A 351-amino-acid chain; its full sequence is Ribosomal RNA large subunit methyltransferase M (351 aa).

Residues serine 183, 216–219 (APGG), aspartate 235, aspartate 255, and aspartate 271 contribute to the S-adenosyl-L-methionine site. Catalysis depends on lysine 300, which acts as the Proton acceptor.

The protein belongs to the class I-like SAM-binding methyltransferase superfamily. RNA methyltransferase RlmE family. RlmM subfamily. As to quaternary structure, monomer.

It localises to the cytoplasm. It carries out the reaction cytidine(2498) in 23S rRNA + S-adenosyl-L-methionine = 2'-O-methylcytidine(2498) in 23S rRNA + S-adenosyl-L-homocysteine + H(+). In terms of biological role, catalyzes the 2'-O-methylation at nucleotide C2498 in 23S rRNA. The sequence is that of Ribosomal RNA large subunit methyltransferase M from Ectopseudomonas mendocina (strain ymp) (Pseudomonas mendocina).